Reading from the N-terminus, the 279-residue chain is Phosphate import ATP-binding protein PstB 2 (279 aa).

An ABC transporter domain is found at 34–274 (FDIENLDLYY…PSDDRTRGYV (241 aa)). 66–73 (GPSGCGKS) lines the ATP pocket.

It belongs to the ABC transporter superfamily. Phosphate importer (TC 3.A.1.7) family. The complex is composed of two ATP-binding proteins (PstB), two transmembrane proteins (PstC and PstA) and a solute-binding protein (PstS).

It localises to the cell inner membrane. It catalyses the reaction phosphate(out) + ATP + H2O = ADP + 2 phosphate(in) + H(+). Its function is as follows. Part of the ABC transporter complex PstSACB involved in phosphate import. Responsible for energy coupling to the transport system. The protein is Phosphate import ATP-binding protein PstB 2 of Vibrio vulnificus (strain YJ016).